The sequence spans 274 residues: Thiamine kinase (274 aa).

This sequence belongs to the thiamine kinase family.

It catalyses the reaction thiamine + ATP = thiamine phosphate + ADP + H(+). It functions in the pathway cofactor biosynthesis; thiamine diphosphate biosynthesis; thiamine phosphate from thiamine: step 1/1. Functionally, catalyzes the ATP-dependent phosphorylation of thiamine to thiamine phosphate. Is involved in thiamine salvage. This is Thiamine kinase from Salmonella typhimurium (strain LT2 / SGSC1412 / ATCC 700720).